The following is a 97-amino-acid chain: Aspartyl/glutamyl-tRNA(Asn/Gln) amidotransferase subunit C (97 aa).

A disordered region spans residues 74-97 (AEQALDQAPASQRDRFEVPRILGE). Basic and acidic residues predominate over residues 85–97 (QRDRFEVPRILGE).

Belongs to the GatC family. In terms of assembly, heterotrimer of A, B and C subunits.

It carries out the reaction L-glutamyl-tRNA(Gln) + L-glutamine + ATP + H2O = L-glutaminyl-tRNA(Gln) + L-glutamate + ADP + phosphate + H(+). It catalyses the reaction L-aspartyl-tRNA(Asn) + L-glutamine + ATP + H2O = L-asparaginyl-tRNA(Asn) + L-glutamate + ADP + phosphate + 2 H(+). Its function is as follows. Allows the formation of correctly charged Asn-tRNA(Asn) or Gln-tRNA(Gln) through the transamidation of misacylated Asp-tRNA(Asn) or Glu-tRNA(Gln) in organisms which lack either or both of asparaginyl-tRNA or glutaminyl-tRNA synthetases. The reaction takes place in the presence of glutamine and ATP through an activated phospho-Asp-tRNA(Asn) or phospho-Glu-tRNA(Gln). The polypeptide is Aspartyl/glutamyl-tRNA(Asn/Gln) amidotransferase subunit C (Corynebacterium kroppenstedtii (strain DSM 44385 / JCM 11950 / CIP 105744 / CCUG 35717)).